The chain runs to 130 residues: Small ribosomal subunit protein uS9 (130 aa).

This sequence belongs to the universal ribosomal protein uS9 family.

The sequence is that of Small ribosomal subunit protein uS9 (rpsI) from Shigella flexneri.